Consider the following 307-residue polypeptide: Mediator of RNA polymerase II transcription subunit 18 (307 aa).

Over residues 117–126 (TNFNSTNEDQ) the composition is skewed to polar residues. The interval 117–162 (TNFNSTNEDQNNSKHTEDTVNESRNSDDIIDVDMDASPAPSNESCS) is disordered.

Belongs to the Mediator complex subunit 18 family. In terms of assembly, component of the Mediator complex, which is composed of at least 21 subunits that form three structurally distinct submodules. The Mediator head module contains MED6, MED8, MED11, SRB4/MED17, SRB5/MED18, ROX3/MED19, SRB2/MED20 and SRB6/MED22, the middle module contains MED1, MED4, NUT1/MED5, MED7, CSE2/MED9, NUT2/MED10, SRB7/MED21 and SOH1/MED31, and the tail module contains MED2, PGD1/MED3, RGR1/MED14, GAL11/MED15 and SIN4/MED16. The head and the middle modules interact directly with RNA polymerase II, whereas the elongated tail module interacts with gene-specific regulatory proteins. SRB5/MED18 interacts directly with MED8 and SRB2/MED20.

Its subcellular location is the nucleus. In terms of biological role, component of the Mediator complex, a coactivator involved in the regulated transcription of nearly all RNA polymerase II-dependent genes. Mediator functions as a bridge to convey information from gene-specific regulatory proteins to the basal RNA polymerase II transcription machinery. The Mediator complex, having a compact conformation in its free form, is recruited to promoters by direct interactions with regulatory proteins and serves for the assembly of a functional preinitiation complex with RNA polymerase II and the general transcription factors. The Mediator complex unfolds to an extended conformation and partially surrounds RNA polymerase II, specifically interacting with the unphosphorylated form of the C-terminal domain (CTD) of RNA polymerase II. The Mediator complex dissociates from the RNA polymerase II holoenzyme and stays at the promoter when transcriptional elongation begins. This Saccharomyces cerevisiae (strain ATCC 204508 / S288c) (Baker's yeast) protein is Mediator of RNA polymerase II transcription subunit 18 (SRB5).